The sequence spans 452 residues: uncharacterized protein (452 aa).

The next 7 membrane-spanning stretches (helical) occupy residues 18–38 (PIIESDLEVIVIALGGYVLAK), 81–101 (LLPVFYVIISAASILISFLLA), 269–289 (IVLLLDFFSPPLYSLFIALFI), 317–337 (AGQVAVPMILVVLGASLATDI), 354–374 (VIIVCLLGRMVVVPLALLPAF), 390–410 (VFVVVIFLLVGSPTAIQLTQI), and 428–448 (SYAVFTPPNSLLLAFASLLVV).

The protein belongs to the auxin efflux carrier (TC 2.A.69) family.

It is found in the membrane. This is an uncharacterized protein from Schizosaccharomyces pombe (strain 972 / ATCC 24843) (Fission yeast).